A 412-amino-acid polypeptide reads, in one-letter code: Putative disintegrin and metalloproteinase domain-containing protein 5 (412 aa).

The 89-residue stretch at 111-199 (EKYADTNILL…YCLPDTYVRD (89 aa)) folds into the Disintegrin domain. The 35-residue stretch at 351–385 (NLKLCDASNHCDRHGVCNNFNHCHCEKGYNPPYCQ) folds into the EGF-like domain.

In terms of assembly, interacts with TEX101. In terms of tissue distribution, highly expressed in testis.

Functionally, this is a non catalytic metalloprotease-like protein. This is Putative disintegrin and metalloproteinase domain-containing protein 5 (ADAM5) from Homo sapiens (Human).